We begin with the raw amino-acid sequence, 283 residues long: Shikimate dehydrogenase (NADP(+)) (283 aa).

Shikimate contacts are provided by residues Ser19–Ser21 and Thr66. Lys70 serves as the catalytic Proton acceptor. Glu82 is an NADP(+) binding site. Asn91 and Asp107 together coordinate shikimate. NADP(+) contacts are provided by residues Gly133–Ala137 and Ile226. Residue Tyr228 coordinates shikimate. An NADP(+)-binding site is contributed by Gly249.

Belongs to the shikimate dehydrogenase family. Homodimer.

It catalyses the reaction shikimate + NADP(+) = 3-dehydroshikimate + NADPH + H(+). It functions in the pathway metabolic intermediate biosynthesis; chorismate biosynthesis; chorismate from D-erythrose 4-phosphate and phosphoenolpyruvate: step 4/7. In terms of biological role, involved in the biosynthesis of the chorismate, which leads to the biosynthesis of aromatic amino acids. Catalyzes the reversible NADPH linked reduction of 3-dehydroshikimate (DHSA) to yield shikimate (SA). The chain is Shikimate dehydrogenase (NADP(+)) from Rhodospirillum rubrum (strain ATCC 11170 / ATH 1.1.1 / DSM 467 / LMG 4362 / NCIMB 8255 / S1).